A 295-amino-acid chain; its full sequence is F-box protein SKIP24 (295 aa).

One can recognise an F-box; degenerate domain in the interval 19–66 (VKSSTFSYKDLCCISISSRRLFRLSCDDSLWDLLLVHDFPNHIVSASS). Coiled coils occupy residues 82 to 129 (REKE…SSLQ) and 167 to 209 (EGRL…ESMK). Positions 217 to 245 (KSIRNGDQGSNGKTKKLKTSINYSGDQVS) are disordered. Over residues 235–245 (TSINYSGDQVS) the composition is skewed to polar residues.

As to quaternary structure, part of a SCF (ASK-cullin-F-box) protein ligase complex. Interacts with SKP1A/ASK1 and SPK1B/ASK2.

Its pathway is protein modification; protein ubiquitination. In terms of biological role, component of SCF(ASK-cullin-F-box) E3 ubiquitin ligase complexes, which may mediate the ubiquitination and subsequent proteasomal degradation of target proteins. This chain is F-box protein SKIP24 (SKIP24), found in Arabidopsis thaliana (Mouse-ear cress).